A 99-amino-acid polypeptide reads, in one-letter code: Putative protein adenylyltransferase MJ0141 (99 aa).

Residues 29–43 (GSYARGDYDEESDVD) carry the GSX(10)DXD motif motif. Residues Asp-41 and Asp-43 each contribute to the Mg(2+) site.

Belongs to the MntA antitoxin family. Mg(2+) serves as cofactor.

The catalysed reaction is L-tyrosyl-[protein] + ATP = O-(5'-adenylyl)-L-tyrosyl-[protein] + diphosphate. The enzyme catalyses O-(5'-adenylyl)-L-tyrosyl-[protein] + ATP = O-[5'-(adenylyl-(5'-&gt;3')-adenylyl)]-L-tyrosyl-[protein] + diphosphate. Putative antitoxin component of a putative type VII toxin-antitoxin (TA) system. Its cognate toxin might be MF0142, which it might AMPylate. The chain is Putative protein adenylyltransferase MJ0141 from Methanocaldococcus jannaschii (strain ATCC 43067 / DSM 2661 / JAL-1 / JCM 10045 / NBRC 100440) (Methanococcus jannaschii).